The primary structure comprises 1531 residues: La-related protein Larp4B (1531 aa).

The segment covering 112-147 (HTHVAHQQQQQQQQQTIQQHLHQQQQQQSPHPAQHL) has biased composition (low complexity). Disordered regions lie at residues 112–148 (HTHVAHQQQQQQQQQTIQQHLHQQQQQQSPHPAQHLT) and 239–263 (QLPANGSADPQQGSHNAAGGEEPNI). In terms of domain architecture, HTH La-type RNA-binding spans 262-351 (NIPLDKLKQM…RPNRKRCIII (90 aa)). One can recognise an RRM domain in the interval 348-423 (CIIILREISN…KPIMARIKPK (76 aa)). Disordered stretches follow at residues 533–605 (PLPP…QGGN), 710–736 (AHSHHLQAQQQLQGQTQQQHYQLASSS), 748–768 (TAPAPQQPGQHQHHLVVQQTQ), 791–1135 (QEAG…SNQQ), 1160–1211 (DVVR…TPAL), and 1251–1285 (ASSKEEAAGAQQQQQQQLDKSNKTEDEMHPKQPSQ). Over residues 565-578 (YNNNHRGNPNNVGG) the composition is skewed to low complexity. Low complexity-rich tracts occupy residues 754-768 (QPGQHQHHLVVQQTQ) and 810-826 (SSNMSASSSSSLATSMS). Polar residues predominate over residues 860–884 (SSPSNPHPQQHLMSSSTGSNVQSAG). Residues 945-959 (ALSSQQQQHHLTTGT) are compositionally biased toward low complexity. The segment covering 966–975 (HHYHHHHHHN) has biased composition (basic residues). Gly residues predominate over residues 983-1004 (NSGGLGVSSGGSGGGGSGGGSG). Residues 1031 to 1045 (HQQQQQQQQQQQQQQ) show a composition bias toward low complexity. The segment covering 1068–1086 (TSATAPHTPQATGGASLHN) has biased composition (polar residues). Residues 1087–1115 (STTSSSSSTGLGQKQTLHQQQQQAPQQHQ) show a composition bias toward low complexity. Serine 1123 bears the Phosphoserine mark. Residues 1164 to 1173 (TGGGGGGGGK) are compositionally biased toward gly residues. Residues 1183–1200 (PQGQNQPHMAPNYQQHQP) show a composition bias toward polar residues. Over residues 1270-1280 (KSNKTEDEMHP) the composition is skewed to basic and acidic residues. Serine 1370 and serine 1413 each carry phosphoserine. Disordered regions lie at residues 1393-1418 (KAAASSDSKETGSGGSTGTLSPTGSH) and 1450-1531 (GGAS…ANNS). 2 stretches are compositionally biased toward polar residues: residues 1467-1477 (ATNTTQGSSAV) and 1502-1515 (QHYGSATEHNTNAN).

Its function is as follows. Probable RNA binding protein. Negatively regulates myc at the protein level, via an unknown mechanism, and may therefore have a role in growth. Has no effect on myc mRNA levels. In Drosophila melanogaster (Fruit fly), this protein is La-related protein Larp4B.